A 514-amino-acid chain; its full sequence is Pleiotropic regulator 1 (514 aa).

At M1 the chain carries N-acetylmethionine. S119 carries the post-translational modification Phosphoserine. The segment at 135–160 (KADANRTAPSGSEYRHPGASDRPQPT) is disordered. A Phosphoserine modification is found at S201. WD repeat units follow at residues 202 to 241 (GHLG…LKLS), 244 to 283 (GHIS…VIRH), 286 to 325 (GHLS…SVHT), 328 to 367 (GHTN…TRVT), 370 to 410 (NHKK…QNLS), 411 to 449 (GHNA…NFQR), and 460 to 499 (DSES…TEET). Residue S391 is modified to Phosphoserine.

This sequence belongs to the WD repeat PRL1/PRL2 family. Identified in the spliceosome C complex. Component of the PRP19-CDC5L splicing complex composed of a core complex comprising a homotetramer of PRPF19, CDC5L, PLRG1 and BCAS2, and at least three less stably associated proteins CTNNBL1, CWC15 and HSPA8. Interacts (via its WD40 repeat domain) directly with CDC5L (via its C-terminal); the interaction is required for mRNA splicing but not for spliceosome assembly. Component of the minor spliceosome, which splices U12-type introns. Within this complex, interacts with CRIPT. Also interacts directly in the complex with BCAS2 and PRPF19. Interacts with USB1.

It localises to the nucleus. Its subcellular location is the nucleus speckle. Its function is as follows. Involved in pre-mRNA splicing as component of the spliceosome. Component of the PRP19-CDC5L complex that forms an integral part of the spliceosome and is required for activating pre-mRNA splicing. As a component of the minor spliceosome, involved in the splicing of U12-type introns in pre-mRNAs. This chain is Pleiotropic regulator 1 (PLRG1), found in Homo sapiens (Human).